We begin with the raw amino-acid sequence, 664 residues long: L-glutamate oxidase precursor (664 aa).

Positions 1–44 form a signal peptide, tat-type signal; that stretch reads MTEDHAVVRSDGGLSRRSFAAVAGTATVATALTSGVAAALPAPA. 9 residues coordinate FAD: Ala105, Glu124, Ala125, Arg133, Met161, Arg162, Asp638, Trp646, and Ile647.

It belongs to the flavin monoamine oxidase family. LGOX subfamily. In terms of assembly, the mature enzyme is a heterohexamer composed of 2 alpha chains, 2 beta chains and 2 gamma chains (alpha2beta2gamma2). It depends on FAD as a cofactor. Post-translationally, predicted to be exported by the Tat system. The position of the signal peptide cleavage has not been experimentally proven. In terms of processing, the precursor form is proteolytically cleaved by an endopeptidase into alpha, beta and gamma chains, which form the stable mature enzyme.

It is found in the secreted. It catalyses the reaction L-glutamate + O2 + H2O = H2O2 + 2-oxoglutarate + NH4(+). Activity is stimulated in the presence of Mn(2+), Ca(2+) or Mg(2+). In terms of biological role, catalyzes the oxidative deamination of L-glutamate to 2-ketoglutarate along with the production of ammonia and hydrogen peroxide. The protein is L-glutamate oxidase precursor of Streptomyces viridosporus (strain ATCC 14672 / DSM 40746 / JCM 4963 / KCTC 9882 / NRRL B-12104 / FH 1290) (Streptomyces ghanaensis).